Consider the following 388-residue polypeptide: Phosphopentomutase (388 aa).

Positions 11, 283, 288, 324, 325, and 336 each coordinate Mn(2+).

The protein belongs to the phosphopentomutase family. Requires Mn(2+) as cofactor.

It is found in the cytoplasm. The catalysed reaction is 2-deoxy-alpha-D-ribose 1-phosphate = 2-deoxy-D-ribose 5-phosphate. The enzyme catalyses alpha-D-ribose 1-phosphate = D-ribose 5-phosphate. Its pathway is carbohydrate degradation; 2-deoxy-D-ribose 1-phosphate degradation; D-glyceraldehyde 3-phosphate and acetaldehyde from 2-deoxy-alpha-D-ribose 1-phosphate: step 1/2. Isomerase that catalyzes the conversion of deoxy-ribose 1-phosphate (dRib-1-P) and ribose 1-phosphate (Rib-1-P) to deoxy-ribose 5-phosphate (dRib-5-P) and ribose 5-phosphate (Rib-5-P), respectively. The chain is Phosphopentomutase from Anaeromyxobacter sp. (strain K).